The sequence spans 276 residues: tRNA dimethylallyltransferase (276 aa).

The tract at residues 9-12 (DSLS) is interaction with substrate tRNA.

It belongs to the IPP transferase family. In terms of assembly, monomer. It depends on Mg(2+) as a cofactor.

The enzyme catalyses adenosine(37) in tRNA + dimethylallyl diphosphate = N(6)-dimethylallyladenosine(37) in tRNA + diphosphate. In terms of biological role, catalyzes the transfer of a dimethylallyl group onto the adenine at position 37 in tRNAs that read codons beginning with uridine, leading to the formation of N6-(dimethylallyl)adenosine (i(6)A). In Helicobacter pylori (strain Shi470), this protein is tRNA dimethylallyltransferase (miaA).